Here is a 557-residue protein sequence, read N- to C-terminus: Protein PNS1 (557 aa).

The segment at 1–58 (MSTEKQYQPQQPPPAYTGQGPDNGNAYGYPESYGKTETHSGDSCSGDTSMNPQQQGQQ) is disordered. Residues 1-99 (MSTEKQYQPQ…DNNKPKFNDW (99 aa)) are Cytoplasmic-facing. A compositionally biased stretch (polar residues) spans 41-58 (GDSCSGDTSMNPQQQGQQ). Residues 100–120 (PFIIVFLLTLCGFIVVASLTL) traverse the membrane as a helical segment. The Extracellular segment spans residues 121 to 147 (RAWSQTYSSTGSGIYHDFDTGTLNTNS). The chain crosses the membrane as a helical span at residues 148–168 (VILLVFSVVIAIFFAFIGIVL). The Cytoplasmic portion of the chain corresponds to 169-174 (CRAYPK). A helical membrane pass occupies residues 175–195 (FFIYAGMIVNILAALGTAIMY). Over 196 to 200 (MSLKY) the chain is Extracellular. A helical transmembrane segment spans residues 201-221 (WSAGIVFLIFTFMTAWCYWGM). At 222–246 (RSRIPLTVAILRVIVLAMKNCPQSL) the chain is on the cytoplasmic side. The helical transmembrane segment at 247-267 (FVSFFGTIVASAFAMLFSTVV) threads the bilayer. Residues 268–292 (VATYMKYDPSNTNSGCNVSGGDCSH) are Extracellular-facing. Asparagine 284 carries an N-linked (GlcNAc...) asparagine glycan. The helical transmembrane segment at 293–313 (AKLIGVLVVVFFCGYYISEVI) threads the bilayer. At 314–350 (RNVMHCTVSGVFGSWYYRYKSDQGMPKWPAMGAFKRA) the chain is on the cytoplasmic side. Residues 351 to 371 (MTYSFGSICFGSLIVSIIETF) form a helical membrane-spanning segment. Topologically, residues 372 to 393 (RQLLQLGKQAAIASTDNANWIR) are extracellular. The chain crosses the membrane as a helical span at residues 394–414 (IIFWLIDMLVGFIQWIAQYFN). The Cytoplasmic portion of the chain corresponds to 415-454 (HYAYCIIALYGKPYLKAAKQTWYMFREKGIDALINDNLVN). A helical membrane pass occupies residues 455–475 (VALGFYSLFASYMSCLFAFLY). The Extracellular portion of the chain corresponds to 476–488 (LRFTKPGYNSDGD). The helical transmembrane segment at 489–509 (FNAPLMAFAFVIALQLTNIAN) threads the bilayer. At 510-557 (ETIRSGCATFFTALGHDPEVFQAQYPDRFDEIFRSYPQVLNKLTHQDV) the chain is on the cytoplasmic side.

The protein belongs to the CTL (choline transporter-like) family.

It localises to the cell membrane. Functionally, probably involved in transport through the plasma membrane. This Candida glabrata (strain ATCC 2001 / BCRC 20586 / JCM 3761 / NBRC 0622 / NRRL Y-65 / CBS 138) (Yeast) protein is Protein PNS1 (PNS1).